Reading from the N-terminus, the 580-residue chain is Cytochrome c oxidase subunit 1 (580 aa).

The disordered stretch occupies residues 1 to 25 (MTAVAPRVDGHVAPQRPEPTGHARK). Residues 43–63 (IMYIIMSFSFFFLGGLMALLI) traverse the membrane as a helical segment. Position 87 (His-87) interacts with Fe(II)-heme a. The next 6 membrane-spanning stretches (helical) occupy residues 90 to 110 (VMLLLYGTPIVWGFANYVLPL), 122 to 142 (LNAFGFWITTVGGVAMLAGFL), 171 to 191 (MWIIGVGATGIGSVASAINML), 214 to 234 (IFVTSVLALLIFPLLLAAALG), 259 to 279 (LFWFFGHPEVYVLALPFFGII), and 292 to 312 (FGYIGLVFATLSIGALSMAVW). Cu cation contacts are provided by His-265 and Tyr-269. Positions 265–269 (HPEVY) form a cross-link, 1'-histidyl-3'-tyrosine (His-Tyr). Residues His-314 and His-315 each coordinate Cu cation. 2 helical membrane passes run 316 to 336 (MFVTGAVLLPFFSFMTFLISV) and 360 to 380 (MIWAVGFMSTFLFGGLTGIML). Position 398 (His-398) interacts with heme a3. 3 consecutive transmembrane segments (helical) span residues 399–419 (FHYTLFGTVVFASCAGVYFWF), 434–454 (IHFWLTFVGFHGTFMVQHWLG), and 477–497 (ISTIFSFLLGLSVIPFVWNVF). His-400 lines the Fe(II)-heme a pocket.

It belongs to the heme-copper respiratory oxidase family. Associates with subunits II, III and IV to form cytochrome c oxidase. The cofactor is Cu(2+). It depends on heme as a cofactor.

Its subcellular location is the cell membrane. The catalysed reaction is 4 Fe(II)-[cytochrome c] + O2 + 8 H(+)(in) = 4 Fe(III)-[cytochrome c] + 2 H2O + 4 H(+)(out). It functions in the pathway energy metabolism; oxidative phosphorylation. Its function is as follows. Cytochrome c oxidase is the component of the respiratory chain that catalyzes the reduction of oxygen to water. Subunits 1-3 form the functional core of the enzyme complex. CO I is the catalytic subunit of the enzyme. Electrons originating in cytochrome c are transferred via the copper A center of subunit 2 and heme A of subunit 1 to the bimetallic center formed by heme A3 and copper B. This is Cytochrome c oxidase subunit 1 (ctaD) from Corynebacterium efficiens (strain DSM 44549 / YS-314 / AJ 12310 / JCM 11189 / NBRC 100395).